Here is a 599-residue protein sequence, read N- to C-terminus: Putative clathrin assembly protein At1g03050 (599 aa).

Positions 26–162 constitute an ENTH domain; sequence GRSASLSELD…DFRMQARHGK (137 aa). Disordered stretches follow at residues 332 to 382 and 580 to 599; these read KQSK…PEEE and QGHM…TPQY. Composition is skewed to acidic residues over residues 341 to 359 and 373 to 382; these read ADED…EQED and EEDDVKPEEE. Polar residues predominate over residues 585–599; sequence LRQNQNQPYSYTPQY.

The protein resides in the membrane. It localises to the clathrin-coated pit. It is found in the golgi apparatus. The protein localises to the cytoplasmic vesicle. Its subcellular location is the clathrin-coated vesicle. In Arabidopsis thaliana (Mouse-ear cress), this protein is Putative clathrin assembly protein At1g03050.